Consider the following 145-residue polypeptide: 3-hydroxyacyl-[acyl-carrier-protein] dehydratase FabZ (145 aa).

Residue His-47 is part of the active site.

This sequence belongs to the thioester dehydratase family. FabZ subfamily.

It is found in the cytoplasm. The enzyme catalyses a (3R)-hydroxyacyl-[ACP] = a (2E)-enoyl-[ACP] + H2O. In terms of biological role, involved in unsaturated fatty acids biosynthesis. Catalyzes the dehydration of short chain beta-hydroxyacyl-ACPs and long chain saturated and unsaturated beta-hydroxyacyl-ACPs. The polypeptide is 3-hydroxyacyl-[acyl-carrier-protein] dehydratase FabZ (Acidovorax sp. (strain JS42)).